The chain runs to 160 residues: Transcriptional repressor NrdR (160 aa).

Residues 3-34 (CPYCQYEDTQVKDSRPAEEGAVIRRRRVCSVC) fold into a zinc finger. The ATP-cone domain maps to 49-139 (LLITKKNGRC…VYRDFRNASD (91 aa)).

Belongs to the NrdR family. The cofactor is Zn(2+).

In terms of biological role, negatively regulates transcription of bacterial ribonucleotide reductase nrd genes and operons by binding to NrdR-boxes. The protein is Transcriptional repressor NrdR of Bartonella tribocorum (strain CIP 105476 / IBS 506).